The following is a 741-amino-acid chain: 1,4-alpha-glucan branching enzyme GlgB (741 aa).

The Nucleophile role is filled by D420. E473 (proton donor) is an active-site residue.

The protein belongs to the glycosyl hydrolase 13 family. GlgB subfamily. As to quaternary structure, monomer.

The enzyme catalyses Transfers a segment of a (1-&gt;4)-alpha-D-glucan chain to a primary hydroxy group in a similar glucan chain.. It functions in the pathway glycan biosynthesis; glycogen biosynthesis. Its function is as follows. Catalyzes the formation of the alpha-1,6-glucosidic linkages in glycogen by scission of a 1,4-alpha-linked oligosaccharide from growing alpha-1,4-glucan chains and the subsequent attachment of the oligosaccharide to the alpha-1,6 position. This Pseudomonas syringae pv. tomato (strain ATCC BAA-871 / DC3000) protein is 1,4-alpha-glucan branching enzyme GlgB.